The primary structure comprises 1047 residues: Cation efflux system protein CusA (1047 aa).

The next 12 membrane-spanning stretches (helical) occupy residues 14–34, 338–358, 363–383, 391–411, 446–466, 485–505, 532–552, 871–891, 898–918, 928–948, 985–1005, and 1012–1032; these read FLVL…IINT, LSGK…LFLW, ALVA…VMHF, MSLG…IVMI, VGPA…PIFT, AMAG…GYWI, VLHW…TVLW, KLKL…YLAF, LLII…LWWM, TGFI…LMYL, AMTV…TGAG, and IAAP…FIIP.

The protein belongs to the resistance-nodulation-cell division (RND) (TC 2.A.6) family. As to quaternary structure, the cus efflux system is composed of CusA, CusB, CusC and CusF.

The protein localises to the cell inner membrane. Its function is as follows. Part of a cation efflux system that mediates resistance to copper and silver. The polypeptide is Cation efflux system protein CusA (cusA) (Escherichia coli (strain K12)).